A 508-amino-acid chain; its full sequence is Lysine--tRNA ligase (508 aa).

Mg(2+)-binding residues include E418 and E425.

It belongs to the class-II aminoacyl-tRNA synthetase family. Homodimer. The cofactor is Mg(2+).

Its subcellular location is the cytoplasm. It carries out the reaction tRNA(Lys) + L-lysine + ATP = L-lysyl-tRNA(Lys) + AMP + diphosphate. The chain is Lysine--tRNA ligase from Burkholderia pseudomallei (strain 668).